Reading from the N-terminus, the 1068-residue chain is Carbamoyl phosphate synthase large chain (1068 aa).

The carboxyphosphate synthetic domain stretch occupies residues 1 to 403 (MPKRTDINTI…SLQKALRGLE (403 aa)). Positions 129, 169, 175, 176, 208, 210, 215, 241, 242, 243, 285, and 299 each coordinate ATP. Positions 133–328 (KEAMEKIGLS…IAKVAAKLAV (196 aa)) constitute an ATP-grasp 1 domain. Mg(2+)-binding residues include Q285, E299, and N301. Mn(2+)-binding residues include Q285, E299, and N301. The segment at 404–548 (TGICGFNLMS…YSTYEEECES (145 aa)) is oligomerization domain. Residues 549–930 (RPSDKKKIMI…AFLKAQLGAN (382 aa)) are carbamoyl phosphate synthetic domain. The region spanning 673–864 (QQILHKLHLK…LAKIAARVMA (192 aa)) is the ATP-grasp 2 domain. 10 residues coordinate ATP: R709, H748, L750, E755, G780, I781, H782, S783, Q823, and E835. Residues Q823, E835, and N837 each contribute to the Mg(2+) site. Positions 823, 835, and 837 each coordinate Mn(2+). The region spanning 931–1068 (ERIPKTGKVF…SLQDLHQRLL (138 aa)) is the MGS-like domain. An allosteric domain region spans residues 931–1068 (ERIPKTGKVF…SLQDLHQRLL (138 aa)).

This sequence belongs to the CarB family. In terms of assembly, composed of two chains; the small (or glutamine) chain promotes the hydrolysis of glutamine to ammonia, which is used by the large (or ammonia) chain to synthesize carbamoyl phosphate. Tetramer of heterodimers (alpha,beta)4. Requires Mg(2+) as cofactor. Mn(2+) serves as cofactor.

It carries out the reaction hydrogencarbonate + L-glutamine + 2 ATP + H2O = carbamoyl phosphate + L-glutamate + 2 ADP + phosphate + 2 H(+). It catalyses the reaction hydrogencarbonate + NH4(+) + 2 ATP = carbamoyl phosphate + 2 ADP + phosphate + 2 H(+). Its pathway is amino-acid biosynthesis; L-arginine biosynthesis; carbamoyl phosphate from bicarbonate: step 1/1. The protein operates within pyrimidine metabolism; UMP biosynthesis via de novo pathway; (S)-dihydroorotate from bicarbonate: step 1/3. In terms of biological role, large subunit of the glutamine-dependent carbamoyl phosphate synthetase (CPSase). CPSase catalyzes the formation of carbamoyl phosphate from the ammonia moiety of glutamine, carbonate, and phosphate donated by ATP, constituting the first step of 2 biosynthetic pathways, one leading to arginine and/or urea and the other to pyrimidine nucleotides. The large subunit (synthetase) binds the substrates ammonia (free or transferred from glutamine from the small subunit), hydrogencarbonate and ATP and carries out an ATP-coupled ligase reaction, activating hydrogencarbonate by forming carboxy phosphate which reacts with ammonia to form carbamoyl phosphate. The polypeptide is Carbamoyl phosphate synthase large chain (Pasteurella multocida (strain Pm70)).